The primary structure comprises 510 residues: NAD(P)H-quinone oxidoreductase subunit 2 B, chloroplastic (510 aa).

12 consecutive transmembrane segments (helical) span residues 24 to 44 (LLLFNGSFIFPECILIFGLIL), 59 to 79 (WFYFISSTSLVISITALLFRW), 99 to 119 (IFQFLILLCSTLCIPLSVEYI), 124 to 144 (MAITEFLLFILTATLGGMFLC), 149 to 169 (LITIFVAPECFSLCSYLLSGY), 183 to 203 (YLLMGGASSSILVHGFSWLYG), 229 to 249 (ISIALISITVGLGFKLSPAPF), 295 to 315 (WHLLLEILAILSMILGNLLAI), 323 to 343 (MLAYSSIGQIGYVIIGIIVGD), 354 to 374 (YMLFYISMNLGTFACIVLFGL), 395 to 415 (ALSLALCLLSLGGLPPLAGFF), and 418 to 438 (LYLFWCGWQAGLYFLVSIGLL).

It belongs to the complex I subunit 2 family. As to quaternary structure, NDH is composed of at least 16 different subunits, 5 of which are encoded in the nucleus.

Its subcellular location is the plastid. It localises to the chloroplast thylakoid membrane. It catalyses the reaction a plastoquinone + NADH + (n+1) H(+)(in) = a plastoquinol + NAD(+) + n H(+)(out). It carries out the reaction a plastoquinone + NADPH + (n+1) H(+)(in) = a plastoquinol + NADP(+) + n H(+)(out). NDH shuttles electrons from NAD(P)H:plastoquinone, via FMN and iron-sulfur (Fe-S) centers, to quinones in the photosynthetic chain and possibly in a chloroplast respiratory chain. The immediate electron acceptor for the enzyme in this species is believed to be plastoquinone. Couples the redox reaction to proton translocation, and thus conserves the redox energy in a proton gradient. This chain is NAD(P)H-quinone oxidoreductase subunit 2 B, chloroplastic, found in Lolium perenne (Perennial ryegrass).